A 227-amino-acid chain; its full sequence is Cytochrome c oxidase subunit 2 (227 aa).

At M1–S14 the chain is on the mitochondrial intermembrane side. The helical transmembrane segment at P15–T45 threads the bilayer. Residues L46–Q59 are Mitochondrial matrix-facing. A helical transmembrane segment spans residues E60–T87. Topologically, residues D88–L227 are mitochondrial intermembrane. Residues H161, C196, E198, C200, H204, and M207 each coordinate Cu cation. E198 contacts Mg(2+).

Belongs to the cytochrome c oxidase subunit 2 family. Component of the cytochrome c oxidase (complex IV, CIV), a multisubunit enzyme composed of 14 subunits. The complex is composed of a catalytic core of 3 subunits MT-CO1, MT-CO2 and MT-CO3, encoded in the mitochondrial DNA, and 11 supernumerary subunits COX4I, COX5A, COX5B, COX6A, COX6B, COX6C, COX7A, COX7B, COX7C, COX8 and NDUFA4, which are encoded in the nuclear genome. The complex exists as a monomer or a dimer and forms supercomplexes (SCs) in the inner mitochondrial membrane with NADH-ubiquinone oxidoreductase (complex I, CI) and ubiquinol-cytochrome c oxidoreductase (cytochrome b-c1 complex, complex III, CIII), resulting in different assemblies (supercomplex SCI(1)III(2)IV(1) and megacomplex MCI(2)III(2)IV(2)). Found in a complex with TMEM177, COA6, COX18, COX20, SCO1 and SCO2. Interacts with TMEM177 in a COX20-dependent manner. Interacts with COX20. Interacts with COX16. Requires Cu cation as cofactor.

The protein resides in the mitochondrion inner membrane. The catalysed reaction is 4 Fe(II)-[cytochrome c] + O2 + 8 H(+)(in) = 4 Fe(III)-[cytochrome c] + 2 H2O + 4 H(+)(out). Functionally, component of the cytochrome c oxidase, the last enzyme in the mitochondrial electron transport chain which drives oxidative phosphorylation. The respiratory chain contains 3 multisubunit complexes succinate dehydrogenase (complex II, CII), ubiquinol-cytochrome c oxidoreductase (cytochrome b-c1 complex, complex III, CIII) and cytochrome c oxidase (complex IV, CIV), that cooperate to transfer electrons derived from NADH and succinate to molecular oxygen, creating an electrochemical gradient over the inner membrane that drives transmembrane transport and the ATP synthase. Cytochrome c oxidase is the component of the respiratory chain that catalyzes the reduction of oxygen to water. Electrons originating from reduced cytochrome c in the intermembrane space (IMS) are transferred via the dinuclear copper A center (CU(A)) of subunit 2 and heme A of subunit 1 to the active site in subunit 1, a binuclear center (BNC) formed by heme A3 and copper B (CU(B)). The BNC reduces molecular oxygen to 2 water molecules using 4 electrons from cytochrome c in the IMS and 4 protons from the mitochondrial matrix. The chain is Cytochrome c oxidase subunit 2 (MT-CO2) from Gorilla gorilla beringei (Mountain gorilla).